Here is an 85-residue protein sequence, read N- to C-terminus: MRKHSDCMNFCAVDATKGICRLSKQMINLDDSACPEIKVMPKCKNCKNFVEANDEGIGKCVGLEKEDWVYSTLNAITCEGHVFNE.

The [4Fe-4S] cluster site is built by histidine 4, cysteine 7, cysteine 20, cysteine 34, cysteine 43, cysteine 46, cysteine 60, and cysteine 78.

Belongs to the HPA decarboxylase small subunit family. As to quaternary structure, heterooctamer consisting of 4 large (HpdB) subunits and 4 small (HpdC) subunits, arranged as a tetramer of heterodimers. It depends on [4Fe-4S] cluster as a cofactor.

It carries out the reaction 4-hydroxyphenylacetate + H(+) = 4-methylphenol + CO2. The catalysed reaction is 3,4-dihydroxyphenylacetate + H(+) = 4-methylcatechol + CO2. In terms of biological role, component of the HPA decarboxylase that decarboxylates phenylacetates with a hydroxyl group in the p-position. Active toward 4-hydroxyphenylacetate and 3,4-dihydroxyphenylacetate, forming 4-methylphenol and 4-methylcatechol, respectively. Is likely involved in the catabolism of aromatic amino acids such as tyrosine fermentation. 4-methylphenol (p-cresol) formation provides metabolic toxicity, which allows an active suppression of other microbes and may provide growth advantages for the producers in highly competitive environments. The small subunit is essential for enzymatic activity of HPA decarboxylase, and also seems to be involved in the regulation of the enzyme oligomeric state and catalytic activity. The chain is 4-hydroxyphenylacetate decarboxylase small subunit from Clostridioides difficile (strain CD196) (Peptoclostridium difficile).